A 291-amino-acid chain; its full sequence is N-acetylmannosamine kinase (291 aa).

ATP is bound by residues 5–12 and 132–139; these read AIDIGGTK and GVGGGVVC. Zn(2+) contacts are provided by His156, Cys166, Cys168, and Cys173.

This sequence belongs to the ROK (NagC/XylR) family. NanK subfamily. In terms of assembly, homodimer.

The enzyme catalyses an N-acyl-D-mannosamine + ATP = an N-acyl-D-mannosamine 6-phosphate + ADP + H(+). It participates in amino-sugar metabolism; N-acetylneuraminate degradation; D-fructose 6-phosphate from N-acetylneuraminate: step 2/5. Functionally, catalyzes the phosphorylation of N-acetylmannosamine (ManNAc) to ManNAc-6-P. This is N-acetylmannosamine kinase from Salmonella gallinarum (strain 287/91 / NCTC 13346).